The chain runs to 177 residues: Olfactory protein (177 aa).

Residues 1–17 (MIRIIAIVVLFFLQCQA) form the signal peptide. The cysteines at positions 81 and 174 are disulfide-linked.

The protein belongs to the calycin superfamily. Lipocalin family. As to expression, synthesized in Bowman glands, which secrete the mucus that bathes the cilia of the olfactory neuroepithelium.

The protein localises to the secreted. In Lithobates pipiens (Northern leopard frog), this protein is Olfactory protein.